We begin with the raw amino-acid sequence, 351 residues long: AT-hook motif nuclear-localized protein 10 (351 aa).

A disordered region spans residues 1–151; sequence MSGSETGLMA…RPPGSSSKRL (151 aa). Positions 23-37 are enriched in low complexity; it reads HQQQQHSQAQPQQSQ. Over residues 60 to 77 the composition is skewed to polar residues; it reads SPPQQYQPNSAGENSVLN. The short motif at 97 to 105 is the Bipartite nuclear localization signal element; that stretch reads KKRRGRPRK. 2 consecutive DNA-binding regions (a.T hook) follow at residues 97-109 and 138-149; these read KKRR…YGPD and KKRGRPPGSSSK. Positions 159–301 constitute a PPC domain; that stretch reads TGIGFTPHVL…QMGLSSPVLP (143 aa). Composition is skewed to polar residues over residues 310-325 and 334-351; these read MTPS…SESS and IHQS…MPWK. The tract at residues 310–351 is disordered; that stretch reads MTPSSPQSRGTMSESSCGGGHGSPIHQSTGGPYNNTINMPWK.

The protein resides in the nucleus. Its function is as follows. Transcription factor that specifically binds AT-rich DNA sequences related to the nuclear matrix attachment regions (MARs). This is AT-hook motif nuclear-localized protein 10 from Arabidopsis thaliana (Mouse-ear cress).